Consider the following 143-residue polypeptide: Transcriptional regulator MraZ (143 aa).

SpoVT-AbrB domains lie at 5 to 47 (TYTP…PKEE) and 76 to 119 (ADEQ…DAQA).

It belongs to the MraZ family. Forms oligomers.

The protein localises to the cytoplasm. The protein resides in the nucleoid. The polypeptide is Transcriptional regulator MraZ (Corynebacterium glutamicum (strain R)).